Consider the following 89-residue polypeptide: uncharacterized protein (89 aa).

The tract at residues 31–89 is disordered; the sequence is TPQPLEPHEHPKPMEPNEFDPKPDDPPRNPDPSPFPNEVPKPKPSDFPIPDELYPQPIV. The span at 36-58 shows a compositional bias: basic and acidic residues; that stretch reads EPHEHPKPMEPNEFDPKPDDPPR. Pro residues predominate over residues 59–69; it reads NPDPSPFPNEV.

This is an uncharacterized protein from Dictyostelium discoideum (Social amoeba).